The primary structure comprises 98 residues: NADH-ubiquinone oxidoreductase chain 4L (98 aa).

The next 3 membrane-spanning stretches (helical) occupy residues M2–F22, L26–I46, and I59–V79.

The protein belongs to the complex I subunit 4L family. Core subunit of respiratory chain NADH dehydrogenase (Complex I) which is composed of 45 different subunits.

The protein localises to the mitochondrion inner membrane. The catalysed reaction is a ubiquinone + NADH + 5 H(+)(in) = a ubiquinol + NAD(+) + 4 H(+)(out). Its function is as follows. Core subunit of the mitochondrial membrane respiratory chain NADH dehydrogenase (Complex I) which catalyzes electron transfer from NADH through the respiratory chain, using ubiquinone as an electron acceptor. Part of the enzyme membrane arm which is embedded in the lipid bilayer and involved in proton translocation. This Phodopus sungorus (Striped hairy-footed hamster) protein is NADH-ubiquinone oxidoreductase chain 4L (MT-ND4L).